A 559-amino-acid polypeptide reads, in one-letter code: Formate--tetrahydrofolate ligase (559 aa).

Residue 68–75 (TPAGEGKT) coordinates ATP.

Belongs to the formate--tetrahydrofolate ligase family.

The enzyme catalyses (6S)-5,6,7,8-tetrahydrofolate + formate + ATP = (6R)-10-formyltetrahydrofolate + ADP + phosphate. Its pathway is one-carbon metabolism; tetrahydrofolate interconversion. In Rhizobium johnstonii (strain DSM 114642 / LMG 32736 / 3841) (Rhizobium leguminosarum bv. viciae), this protein is Formate--tetrahydrofolate ligase.